Here is a 958-residue protein sequence, read N- to C-terminus: N-terminal acetyltransferase B complex subunit NAA25 homolog (958 aa).

TPR repeat units follow at residues alanine 7–threonine 42, glutamate 78–glutamate 111, and phenylalanine 320–tyrosine 353.

This sequence belongs to the MDM20/NAA25 family. As to quaternary structure, component of the N-terminal acetyltransferase B (NatB) complex. Interacts with acer-1. In terms of tissue distribution, expressed in germline and somatic cells.

The protein localises to the cytoplasm. It is found in the nucleus. It localises to the chromosome. Its function is as follows. Non-catalytic subunit of the NatB complex which catalyzes acetylation of the N-terminal methionine residues of proteins beginning with Met-Asp or Met-Glu. Required for chromosome organization and arrangement; specifically for assembly of the central region components of the synaptonemal complex onto chromosomes during meiosis and for DNA double stranded break formation and repair. Acts downstream of xnd-1 to regulate levels of histone acetylation in germ and somatic cell nuclei by controlling acetyl-CoA production through antagonizing the acetyl-CoA hydrolase activity of acer-1. The chain is N-terminal acetyltransferase B complex subunit NAA25 homolog from Caenorhabditis elegans.